Reading from the N-terminus, the 210-residue chain is Protein-L-isoaspartate O-methyltransferase (210 aa).

Residue Ser-54 is part of the active site.

Belongs to the methyltransferase superfamily. L-isoaspartyl/D-aspartyl protein methyltransferase family.

It localises to the cytoplasm. It catalyses the reaction [protein]-L-isoaspartate + S-adenosyl-L-methionine = [protein]-L-isoaspartate alpha-methyl ester + S-adenosyl-L-homocysteine. In terms of biological role, catalyzes the methyl esterification of L-isoaspartyl residues in peptides and proteins that result from spontaneous decomposition of normal L-aspartyl and L-asparaginyl residues. It plays a role in the repair and/or degradation of damaged proteins. The protein is Protein-L-isoaspartate O-methyltransferase of Methanothrix thermoacetophila (strain DSM 6194 / JCM 14653 / NBRC 101360 / PT) (Methanosaeta thermophila).